A 175-amino-acid polypeptide reads, in one-letter code: Disulfide bond formation protein B (175 aa).

Residues 1 to 13 (MTALTRFAHSRSS) lie on the Cytoplasmic side of the membrane. Residues 14–30 (WFLLTGTAIGLEAAALY) form a helical membrane-spanning segment. The Periplasmic segment spans residues 31 to 48 (FQYVMKLDPCVMCIYQRL). C40 and C43 form a disulfide bridge. A helical transmembrane segment spans residues 49-64 (AVFGILVAGLIGMTAP). Over 65–71 (KYRLIRI) the chain is Cytoplasmic. A helical transmembrane segment spans residues 72–89 (LGASCWAVSATWGLKLAL). The Periplasmic portion of the chain corresponds to 90-144 (ALVNMQNNPSPFATCSFLPEFPTWMPLHEWFPAVMLPTGMCTDLPWRFMDVTMAE). A disulfide bridge connects residues C104 and C130. A helical transmembrane segment spans residues 145–163 (WMVVVFSTFLVIWLLFIVP). The Cytoplasmic portion of the chain corresponds to 164 to 175 (ILSGSTKPSLYK).

It belongs to the DsbB family.

The protein resides in the cell inner membrane. Functionally, required for disulfide bond formation in some periplasmic proteins. Acts by oxidizing the DsbA protein. In Shewanella sp. (strain W3-18-1), this protein is Disulfide bond formation protein B.